Consider the following 185-residue polypeptide: Elongation factor P (185 aa).

This sequence belongs to the elongation factor P family.

It is found in the cytoplasm. It functions in the pathway protein biosynthesis; polypeptide chain elongation. Its function is as follows. Involved in peptide bond synthesis. Stimulates efficient translation and peptide-bond synthesis on native or reconstituted 70S ribosomes in vitro. Probably functions indirectly by altering the affinity of the ribosome for aminoacyl-tRNA, thus increasing their reactivity as acceptors for peptidyl transferase. This is Elongation factor P from Streptococcus pyogenes serotype M28 (strain MGAS6180).